The primary structure comprises 56 residues: Large ribosomal subunit protein bL32 (56 aa).

Residues 1–26 form a disordered region; the sequence is MAVQQNKKSRSKRGMRRSHDALSTAQ. Positions 7–16 are enriched in basic residues; that stretch reads KKSRSKRGMR.

It belongs to the bacterial ribosomal protein bL32 family.

In Shewanella denitrificans (strain OS217 / ATCC BAA-1090 / DSM 15013), this protein is Large ribosomal subunit protein bL32.